We begin with the raw amino-acid sequence, 544 residues long: Light-independent protochlorophyllide reductase subunit B (544 aa).

D36 lines the [4Fe-4S] cluster pocket. Residue D286 is the Proton donor of the active site. 421 to 422 (GM) serves as a coordination point for substrate.

Belongs to the ChlB/BchB/BchZ family. As to quaternary structure, protochlorophyllide reductase is composed of three subunits; BchL, BchN and BchB. Forms a heterotetramer of two BchB and two BchN subunits. The cofactor is [4Fe-4S] cluster.

It catalyses the reaction chlorophyllide a + oxidized 2[4Fe-4S]-[ferredoxin] + 2 ADP + 2 phosphate = protochlorophyllide a + reduced 2[4Fe-4S]-[ferredoxin] + 2 ATP + 2 H2O. Its pathway is porphyrin-containing compound metabolism; bacteriochlorophyll biosynthesis (light-independent). In terms of biological role, component of the dark-operative protochlorophyllide reductase (DPOR) that uses Mg-ATP and reduced ferredoxin to reduce ring D of protochlorophyllide (Pchlide) to form chlorophyllide a (Chlide). This reaction is light-independent. The NB-protein (BchN-BchB) is the catalytic component of the complex. This Chloroflexus aggregans (strain MD-66 / DSM 9485) protein is Light-independent protochlorophyllide reductase subunit B.